A 463-amino-acid polypeptide reads, in one-letter code: Protein MRG3-like (463 aa).

The chain crosses the membrane as a helical span at residues 54-74 (WVLSTGIVSFIAFNIWWVYWP). TPR repeat units lie at residues 84 to 118 (KILR…CKAE), 128 to 161 (TGIE…FYNE), 358 to 389 (ELIR…ANEN), and 409 to 442 (SLAH…SEMI).

It belongs to the MGR3 family.

Its subcellular location is the membrane. This chain is Protein MRG3-like, found in Saccharomyces cerevisiae (strain ATCC 204508 / S288c) (Baker's yeast).